The chain runs to 76 residues: Demidefensin-3 (76 aa).

Positions 1-22 are cleaved as a signal peptide; it reads MRTLALHTAMLLLVALHAQAEA. A propeptide spanning residues 23–64 is cleaved from the precursor; the sequence is RQARADEAAAQQQPGADDQGMAHSFTWPENAALPLSESERGL. Residues 25-45 form a disordered region; it reads ARADEAAAQQQPGADDQGMAH. Residues 30–44 are compositionally biased toward low complexity; it reads AAAQQQPGADDQGMA. Cysteines 68 and 73 form a disulfide. Residues 74-76 constitute a propeptide that is removed on maturation; sequence RLL.

The protein belongs to the alpha-defensin family. Theta subfamily. Forms a cyclic homodimer; disulfide-linked. In terms of processing, this is a cyclic peptide.

Has antimicrobial activities against bacteria and fungi. The protein is Demidefensin-3 of Macaca mulatta (Rhesus macaque).